We begin with the raw amino-acid sequence, 1269 residues long: Rho GTPase-activating protein 29 (1269 aa).

Phosphoserine is present on residues Ser-171, Ser-176, Ser-179, and Ser-190. In terms of domain architecture, F-BAR spans 192 to 462 (IELDSMLLKN…SAKLYDPGQE (271 aa)). A coiled-coil region spans residues 296-418 (RKNEMEKQRK…EILTQLRKLV (123 aa)). 2 disordered regions span residues 472–523 (SAEE…NSAD) and 540–599 (DSES…NSLG). Residues Ser-499, Ser-519, and Ser-552 each carry the phosphoserine modification. A compositionally biased stretch (low complexity) spans 540–559 (DSESTGGSSESRSLDSESIS). The segment at 612-657 (THKFRKLRSPTKCRDCEGIVVFHGVECEECLLVCHRKCLENLVIIC) adopts a Phorbol-ester/DAG-type zinc-finger fold. One can recognise a Rho-GAP domain in the interval 671 to 886 (AEFTQVAKKE…FLITYSQKIF (216 aa)). The tract at residues 909–936 (PGYLPKSLLSPEERDPERSMKSLFFSSK) is disordered. Ser-918 bears the Phosphoserine mark. The span at 919–928 (PEERDPERSM) shows a compositional bias: basic and acidic residues. Phosphoserine is present on residues Ser-954 and Ser-1026. Residues 1120–1269 (RSSGDHPVSI…DLEDEIPQFV (150 aa)) form a disordered region. Over residues 1128-1145 (SITQPSKPYTEPVRSTRQ) the composition is skewed to polar residues. Residues Ser-1152 and Ser-1154 each carry the phosphoserine modification. The span at 1162-1172 (TPRTLQPQHWT) shows a compositional bias: polar residues. Over residues 1229–1241 (SRPEEKAEERDQP) the composition is skewed to basic and acidic residues. Over residues 1259–1269 (EDLEDEIPQFV) the composition is skewed to acidic residues. The interaction with PTPN13/PTPL1 stretch occupies residues 1266–1269 (PQFV).

In terms of assembly, interacts with PTPN13/PTPL1. Interacts with RAP2A via its coiled coil domain. Interacts with RASIP1.

Its function is as follows. GTPase activator for the Rho-type GTPases by converting them to an inactive GDP-bound state. Has strong activity toward RHOA, and weaker activity toward RAC1 and CDC42. May act as a specific effector of RAP2A to regulate Rho. In concert with RASIP1, suppresses RhoA signaling and dampens ROCK and MYH9 activities in endothelial cells and plays an essential role in blood vessel tubulogenesis. The protein is Rho GTPase-activating protein 29 (ARHGAP29) of Bos taurus (Bovine).